A 363-amino-acid polypeptide reads, in one-letter code: Transcription factor IIIA (363 aa).

9 C2H2-type zinc fingers span residues 38–62 (FICS…LCKH), 68–92 (FVCD…ILIH), 98–123 (FVCA…ERKH), 130–154 (YVCN…QCQH), 160–184 (FRCT…GKVH), 187–211 (YLCQ…REAH), 215–237 (VTCT…MKTH), 244–269 (YRCP…LSFH), and 275–299 (FVCE…SVVH). Residues 301–363 (PDKKRMKLKV…LAPAALLTVH (63 aa)) are disordered. The segment covering 338-350 (SLPNSTESSSSPE) has biased composition (low complexity).

It is found in the nucleus. Functionally, involved in ribosomal large subunit biogenesis. Binds the approximately 50 base pairs internal control region (ICR) of 5S ribosomal RNA genes. It is required for their RNA polymerase III-dependent transcription and may also maintain the transcription of other genes. Also binds the transcribed 5S RNA's. The chain is Transcription factor IIIA (Gtf3a) from Rattus norvegicus (Rat).